The following is a 561-amino-acid chain: Transmembrane protein 209 (561 aa).

S11 is modified (phosphoserine). A helical transmembrane segment spans residues 28 to 48 (VVLAWGLLNVSMAGMIYTEMT). N57 is a glycosylation site (N-linked (GlcNAc...) asparagine). A helical membrane pass occupies residues 60-80 (YWPLWYIELALASLFSLNALF). S98 is subject to Phosphoserine. 2 disordered regions span residues 120–156 (LAAT…KFAT) and 200–232 (SSPY…PTDK). The segment covering 138 to 152 (SVLSYSPSRSPSTSP) has biased composition (low complexity). Phosphoserine is present on residues S201 and S248. The tract at residues 250 to 270 (EEKQHRVKLGSPDSTSPSTSP) is disordered. The span at 260–270 (SPDSTSPSTSP) shows a compositional bias: low complexity. N-linked (GlcNAc...) asparagine glycosylation is present at N274. S278 carries the phosphoserine modification.

As to quaternary structure, interacts with NUP205.

The protein localises to the membrane. It is found in the nucleus envelope. It localises to the golgi apparatus. Its subcellular location is the cytoplasm. Its function is as follows. Nuclear envelope protein which in association with NUP205, may be involved in nuclear transport of various nuclear proteins in addition to MYC. The polypeptide is Transmembrane protein 209 (Tmem209) (Mus musculus (Mouse)).